The primary structure comprises 289 residues: Pyridoxal kinase PdxY (289 aa).

Substrate-binding positions include Ser9 and 44 to 45; that span reads TQ. Asp112, Val144, Glu149, and Lys182 together coordinate ATP. Residue Asp221 participates in substrate binding.

It belongs to the pyridoxine kinase family. PdxY subfamily. In terms of assembly, homodimer. It depends on Mg(2+) as a cofactor.

The catalysed reaction is pyridoxal + ATP = pyridoxal 5'-phosphate + ADP + H(+). It functions in the pathway cofactor metabolism; pyridoxal 5'-phosphate salvage; pyridoxal 5'-phosphate from pyridoxal: step 1/1. Its function is as follows. Pyridoxal kinase involved in the salvage pathway of pyridoxal 5'-phosphate (PLP). Catalyzes the phosphorylation of pyridoxal to PLP. The sequence is that of Pyridoxal kinase PdxY from Vibrio campbellii (strain ATCC BAA-1116).